The following is a 72-amino-acid chain: Small ribosomal subunit protein bS18c (72 aa).

Belongs to the bacterial ribosomal protein bS18 family. In terms of assembly, part of the 30S ribosomal subunit.

It is found in the plastid. It localises to the chloroplast. In Phaeodactylum tricornutum (strain CCAP 1055/1), this protein is Small ribosomal subunit protein bS18c.